The sequence spans 337 residues: tRNA N6-adenosine threonylcarbamoyltransferase (337 aa).

2 residues coordinate Fe cation: H111 and H115. Residues 134 to 138 (LVSGG), D167, G180, and N272 each bind substrate. Residue D300 participates in Fe cation binding.

This sequence belongs to the KAE1 / TsaD family. The cofactor is Fe(2+).

The protein localises to the cytoplasm. It catalyses the reaction L-threonylcarbamoyladenylate + adenosine(37) in tRNA = N(6)-L-threonylcarbamoyladenosine(37) in tRNA + AMP + H(+). Its function is as follows. Required for the formation of a threonylcarbamoyl group on adenosine at position 37 (t(6)A37) in tRNAs that read codons beginning with adenine. Is involved in the transfer of the threonylcarbamoyl moiety of threonylcarbamoyl-AMP (TC-AMP) to the N6 group of A37, together with TsaE and TsaB. TsaD likely plays a direct catalytic role in this reaction. This Erwinia tasmaniensis (strain DSM 17950 / CFBP 7177 / CIP 109463 / NCPPB 4357 / Et1/99) protein is tRNA N6-adenosine threonylcarbamoyltransferase.